The primary structure comprises 433 residues: Probable imidazolonepropionase (433 aa).

4-imidazolone-5-propanoate-binding residues include tyrosine 160 and histidine 193. Tyrosine 160 is a binding site for N-formimidoyl-L-glutamate. Histidine 261 serves as a coordination point for Fe(3+). A Zn(2+)-binding site is contributed by histidine 261. Glutamate 264 serves as a coordination point for 4-imidazolone-5-propanoate. Residue aspartate 335 coordinates Fe(3+). Aspartate 335 lines the Zn(2+) pocket. Position 337 (asparagine 337) interacts with N-formimidoyl-L-glutamate.

It belongs to the metallo-dependent hydrolases superfamily. HutI family. Zn(2+) is required as a cofactor. Requires Fe(3+) as cofactor.

It catalyses the reaction 4-imidazolone-5-propanoate + H2O = N-formimidoyl-L-glutamate. The protein operates within amino-acid degradation; L-histidine degradation into L-glutamate; N-formimidoyl-L-glutamate from L-histidine: step 3/3. In Danio rerio (Zebrafish), this protein is Probable imidazolonepropionase (amdhd1).